The primary structure comprises 286 residues: Deleted in azoospermia-like-A (286 aa).

One can recognise an RRM domain in the interval 33 to 114 (NTVFVGGIDI…PAIRKICTYV (82 aa)). The region spanning 155–180 (ACPYPSSPPMAIQQIPVGCQQPGYFQ) is the DAZ domain.

It belongs to the RRM DAZ family. Interacts with the C-terminus of pabp1 and with epabp. Prior to oocyte maturation, found in a complex with epabp and pum2 proteins and spdy1 mRNA; pum2 dissociates from the complex during maturation. As to expression, germ-line specific. Oocyte mRNA expression is first restricted to the granulo-fibrillar material (GFM) of the mitochondrial cloud and then to the oocyte germ plasm at the vegetal cortex. Remains an mRNA component of the germ plasm until the neurula stage. In 2-8 cell embryos, expressed in the germ plasm matrix between germinal granules and mitochondria. Expressed in primordial germ cells (PGCs) later in embryogenesis. In addition to the ovaries of adult females, expressed in the testis of adult and juvenile males in spermatogonia and spermatocytes. The protein is restricted to the embryonic germ plasm and primordial germ cells.

It is found in the cytoplasm. Functionally, RNA-binding protein that is required for primordial germ cell (PGC) differentiation and indirectly necessary for the migration of PGCs through the endoderm. May promote meiotic cell division during spermatogenesis. Shows a preference for G- and U-rich RNAs and probably binds the 3'-UTR of target mRNAs. Stimulates the initiation of translation of mRNAs through the recruitment of poly(A)-binding proteins (PABPs). This Xenopus laevis (African clawed frog) protein is Deleted in azoospermia-like-A (dazl-a).